Consider the following 292-residue polypeptide: Formamidopyrimidine-DNA glycosylase (292 aa).

The active-site Schiff-base intermediate with DNA is the Pro2. Glu3 functions as the Proton donor in the catalytic mechanism. Lys60 serves as the catalytic Proton donor; for beta-elimination activity. Residues His109, Arg128, and Lys173 each contribute to the DNA site. An FPG-type zinc finger spans residues 258-292 (NVYRRTGKKCRQCKNLIERQKISGRSTHWCRKCQK). Arg282 acts as the Proton donor; for delta-elimination activity in catalysis.

It belongs to the FPG family. As to quaternary structure, monomer. It depends on Zn(2+) as a cofactor.

The catalysed reaction is Hydrolysis of DNA containing ring-opened 7-methylguanine residues, releasing 2,6-diamino-4-hydroxy-5-(N-methyl)formamidopyrimidine.. It catalyses the reaction 2'-deoxyribonucleotide-(2'-deoxyribose 5'-phosphate)-2'-deoxyribonucleotide-DNA = a 3'-end 2'-deoxyribonucleotide-(2,3-dehydro-2,3-deoxyribose 5'-phosphate)-DNA + a 5'-end 5'-phospho-2'-deoxyribonucleoside-DNA + H(+). Functionally, involved in base excision repair of DNA damaged by oxidation or by mutagenic agents. Acts as a DNA glycosylase that recognizes and removes damaged bases. Has a preference for oxidized purines, such as 7,8-dihydro-8-oxoguanine (8-oxoG). Has AP (apurinic/apyrimidinic) lyase activity and introduces nicks in the DNA strand. Cleaves the DNA backbone by beta-delta elimination to generate a single-strand break at the site of the removed base with both 3'- and 5'-phosphates. The protein is Formamidopyrimidine-DNA glycosylase of Prochlorococcus marinus subsp. pastoris (strain CCMP1986 / NIES-2087 / MED4).